Here is a 47-residue protein sequence, read N- to C-terminus: PhoP/PhoQ regulator MgrB (47 aa).

Residues Trp-6 to Ile-26 form a helical membrane-spanning segment.

It belongs to the MgrB family. May form homooligomers. Probably interacts with the periplasmic domain of PhoQ.

It localises to the cell inner membrane. PhoP-regulated transcription is redox-sensitive, being activated when the periplasm becomes more reducing. MgrB acts between DsbA/DsbB and PhoP/PhoQ in this pathway. Represses PhoP/PhoQ signaling, possibly by binding to the periplasmic domain of PhoQ, altering its activity and that of downstream effector PhoP. This chain is PhoP/PhoQ regulator MgrB, found in Escherichia fergusonii (strain ATCC 35469 / DSM 13698 / CCUG 18766 / IAM 14443 / JCM 21226 / LMG 7866 / NBRC 102419 / NCTC 12128 / CDC 0568-73).